We begin with the raw amino-acid sequence, 438 residues long: uncharacterized protein (438 aa).

A signal peptide spans 1-20 (MNTRLALVLCAVGSGVLSFS). The N-palmitoyl cysteine moiety is linked to residue Cys-21. Residue Cys-21 is the site of S-diacylglycerol cysteine attachment.

The protein resides in the cell membrane. This is an uncharacterized protein from Treponema pallidum (strain Nichols).